The chain runs to 274 residues: Bis(5'-nucleosyl)-tetraphosphatase, symmetrical (274 aa).

Belongs to the Ap4A hydrolase family.

It carries out the reaction P(1),P(4)-bis(5'-adenosyl) tetraphosphate + H2O = 2 ADP + 2 H(+). Hydrolyzes diadenosine 5',5'''-P1,P4-tetraphosphate to yield ADP. The protein is Bis(5'-nucleosyl)-tetraphosphatase, symmetrical of Buchnera aphidicola subsp. Acyrthosiphon pisum (strain Tuc7).